A 979-amino-acid chain; its full sequence is Ankycorbin (979 aa).

Methionine 1 is modified (N-acetylmethionine). A Phosphoserine modification is found at serine 11. 7 ANK repeats span residues 18–51, 52–81, 85–114, 118–147, 151–180, 184–213, and 217–247; these read KNDDRLLQAVENGDAEKVASLLGKKGASATKHDS, EGKTAFHLAAAKGHVECLKVMVTHGVDVTA, SGHSALHVAAKNGHPECIRKLLQYKSPAEN, SGKTALHYAAAQGCLQAVQLLCEHKSPINL, DGNIPLLVAVQNGHSEACHFLLDHGADVNS, NGRTALMLACETGSSNTVDALIKKGADLSL, and LGHNALHYSKLSENAGIQNLLLSKISQDADL. Residues 247–259 are compositionally biased toward basic and acidic residues; the sequence is LKTPTKPKQHDQV. The disordered stretch occupies residues 247 to 299; it reads LKTPTKPKQHDQVSKISSERSGTPKKRKAPPPPISPTQLSDVSSPRSITSTPL. Threonine 249 carries the phosphothreonine modification. A Nuclear localization signal motif is present at residues 270-276; the sequence is PKKRKAP. A phosphoserine mark is found at serine 281, serine 286, and serine 293. A compositionally biased stretch (polar residues) spans 282–299; it reads PTQLSDVSSPRSITSTPL. Phosphothreonine occurs at positions 295 and 297. Phosphoserine occurs at positions 300, 304, 318, 327, 329, 340, 341, and 358. Residues 349-374 are a coiled coil; it reads LVLLQAKVASLTLHNKELQDKLQAKS. Disordered regions lie at residues 392 to 429 and 446 to 467; these read TQTDLAPSPGKASDIPSSDAKSSPPVEHPAGTSTTDND and LESSEAEKKQLQDELQSQRTDT. Residues 430–943 adopt a coiled-coil conformation; it reads VIIRQLQDSL…CKKHHQEVIS (514 aa). The span at 446–457 shows a compositional bias: basic and acidic residues; sequence LESSEAEKKQLQ. A compositionally biased stretch (polar residues) spans 458–467; the sequence is DELQSQRTDT. A phosphoserine mark is found at serine 513, serine 516, serine 667, serine 694, and serine 914.

In terms of assembly, interacts with PALLD. Associates with actin. However, does not bind F-actin directly. As to expression, highly expressed in testis, where it localizes to seminiferous tubules (at protein level). Expressed in ganglion cell layer and in Muller cell fibers of the retina (at protein level). In small intestine highly expressed at the apical and lateral borders of absorptive epithelia (at protein level). In liver highly expressed along the bile canaliculi (at protein level).

The protein localises to the cytoplasm. It is found in the cytoskeleton. Its subcellular location is the stress fiber. The protein resides in the cell cortex. It localises to the cell junction. The protein localises to the nucleus. In terms of biological role, plays a role in actin regulation at the ectoplasmic specialization, a type of cell junction specific to testis. Important for establishment of sperm polarity and normal spermatid adhesion. May also promote integrity of Sertoli cell tight junctions at the blood-testis barrier. This Mus musculus (Mouse) protein is Ankycorbin (Rai14).